The sequence spans 182 residues: ATP-dependent protease subunit HslV (182 aa).

T10 is an active-site residue. A164, C167, and T170 together coordinate Na(+).

The protein belongs to the peptidase T1B family. HslV subfamily. As to quaternary structure, a double ring-shaped homohexamer of HslV is capped on each side by a ring-shaped HslU homohexamer. The assembly of the HslU/HslV complex is dependent on binding of ATP.

The protein resides in the cytoplasm. The catalysed reaction is ATP-dependent cleavage of peptide bonds with broad specificity.. Its activity is regulated as follows. Allosterically activated by HslU binding. Functionally, protease subunit of a proteasome-like degradation complex believed to be a general protein degrading machinery. This chain is ATP-dependent protease subunit HslV, found in Chelativorans sp. (strain BNC1).